The primary structure comprises 91 residues: Putative defective replication initiation protein (91 aa).

This chain is Putative defective replication initiation protein (repA1), found in Escherichia coli (strain K12).